Consider the following 379-residue polypeptide: Chaperone protein DnaJ (379 aa).

The J domain occupies 5–69; it reads EYYERLGVDK…QKRAAYDQYG (65 aa). A CR-type zinc finger spans residues 141 to 223; the sequence is GVEKQVKYNR…CHGSGHEKVA (83 aa). Cysteine 154, cysteine 157, cysteine 171, cysteine 174, cysteine 197, cysteine 200, cysteine 211, and cysteine 214 together coordinate Zn(2+). 4 CXXCXGXG motif repeats span residues 154–161, 171–178, 197–204, and 211–218; these read CHTCGGSG, CHKCGGRG, CDVCHGTG, and CTTCHGSG.

The protein belongs to the DnaJ family. As to quaternary structure, homodimer. Zn(2+) is required as a cofactor.

It localises to the cytoplasm. Functionally, participates actively in the response to hyperosmotic and heat shock by preventing the aggregation of stress-denatured proteins and by disaggregating proteins, also in an autonomous, DnaK-independent fashion. Unfolded proteins bind initially to DnaJ; upon interaction with the DnaJ-bound protein, DnaK hydrolyzes its bound ATP, resulting in the formation of a stable complex. GrpE releases ADP from DnaK; ATP binding to DnaK triggers the release of the substrate protein, thus completing the reaction cycle. Several rounds of ATP-dependent interactions between DnaJ, DnaK and GrpE are required for fully efficient folding. Also involved, together with DnaK and GrpE, in the DNA replication of plasmids through activation of initiation proteins. This is Chaperone protein DnaJ from Lactococcus lactis subsp. cremoris (strain MG1363).